A 359-amino-acid polypeptide reads, in one-letter code: Histamine H2 receptor (359 aa).

Over 1 to 22 the chain is Extracellular; sequence MAPNGTASSFCLDSTACKITIT. Residue Asn4 is glycosylated (N-linked (GlcNAc...) asparagine). The chain crosses the membrane as a helical span at residues 23–44; sequence VVLAVLILITVAGNVVVCLAVG. Over 45–57 the chain is Cytoplasmic; sequence LNRRLRNLTNCFI. The chain crosses the membrane as a helical span at residues 58–81; that stretch reads VSLAITDLLLGLLVLPFSAIYQLS. At 82 to 92 the chain is on the extracellular side; it reads CKWSFGKVFCN. A disulfide bridge links Cys91 with Cys174. Residues 93–114 form a helical membrane-spanning segment; it reads IYTSLDVMLCTASILNLFMISL. At 115 to 134 the chain is on the cytoplasmic side; it reads DRYCAVMDPLRYPVLVTPVR. A helical transmembrane segment spans residues 135-159; it reads VAISLVLIWVISITLSFLSIHLGWN. Residues 160-180 lie on the Extracellular side of the membrane; sequence SRNETSKGNHTTSKCKVQVNE. Residues 181–204 traverse the membrane as a helical segment; sequence VYGLVDGLVTFYLPLLIMCITYYR. The Cytoplasmic segment spans residues 205 to 234; the sequence is IFKVARDQAKRINHISSWKAATIREHKATV. Residues 235-258 traverse the membrane as a helical segment; the sequence is TLAAVMGAFIICWFPYFTAFVYRG. The Extracellular portion of the chain corresponds to 259-267; it reads LRGDDAINE. The helical transmembrane segment at 268-289 threads the bilayer; the sequence is VLEAIVLWLGYANSALNPILYA. Residues 290–359 are Cytoplasmic-facing; that stretch reads ALNRDFRTGY…VTAPQGATDR (70 aa). A lipid anchor (S-palmitoyl cysteine) is attached at Cys305. The segment at 316–340 is disordered; it reads SLRSNASQLSRTQSREPRQQEEKPL. Positions 317 to 327 are enriched in polar residues; sequence LRSNASQLSRT. The span at 328–340 shows a compositional bias: basic and acidic residues; the sequence is QSREPRQQEEKPL.

This sequence belongs to the G-protein coupled receptor 1 family.

Its subcellular location is the cell membrane. In terms of biological role, the H2 subclass of histamine receptors mediates gastric acid secretion. Also appears to regulate gastrointestinal motility and intestinal secretion. Possible role in regulating cell growth and differentiation. The activity of this receptor is mediated by G proteins which activate adenylyl cyclase and, through a separate G protein-dependent mechanism, the phosphoinositide/protein kinase (PKC) signaling pathway. The polypeptide is Histamine H2 receptor (HRH2) (Gorilla gorilla gorilla (Western lowland gorilla)).